A 149-amino-acid polypeptide reads, in one-letter code: 3-dehydroquinate dehydratase (149 aa).

Catalysis depends on Tyr-24, which acts as the Proton acceptor. Substrate is bound by residues Asn-75, His-81, and Asp-88. The active-site Proton donor is His-101. Substrate contacts are provided by residues 102–103 (IS) and Arg-112.

It belongs to the type-II 3-dehydroquinase family. Homododecamer.

It catalyses the reaction 3-dehydroquinate = 3-dehydroshikimate + H2O. It functions in the pathway metabolic intermediate biosynthesis; chorismate biosynthesis; chorismate from D-erythrose 4-phosphate and phosphoenolpyruvate: step 3/7. Catalyzes a trans-dehydration via an enolate intermediate. The chain is 3-dehydroquinate dehydratase from Methylobacterium radiotolerans (strain ATCC 27329 / DSM 1819 / JCM 2831 / NBRC 15690 / NCIMB 10815 / 0-1).